A 264-amino-acid chain; its full sequence is Glutamate racemase (264 aa).

Substrate is bound by residues 9 to 10 (DS) and 41 to 42 (YG). Catalysis depends on Cys72, which acts as the Proton donor/acceptor. 73–74 (NT) provides a ligand contact to substrate. Cys183 serves as the catalytic Proton donor/acceptor. Residue 184–185 (TH) participates in substrate binding.

It belongs to the aspartate/glutamate racemases family.

It carries out the reaction L-glutamate = D-glutamate. It participates in cell wall biogenesis; peptidoglycan biosynthesis. Its function is as follows. Provides the (R)-glutamate required for cell wall biosynthesis. This is Glutamate racemase from Geobacillus sp. (strain WCH70).